Consider the following 237-residue polypeptide: Lectin (237 aa).

Residue Asn-69 is glycosylated (N-linked (GlcNAc...) asparagine). Ile-106 is modified (blocked amino end (Ile)). Mn(2+)-binding residues include Glu-115 and Asp-117. Residues Asp-117, Tyr-120, Asn-122, and Asp-127 each coordinate Ca(2+). Residues Asp-127 and His-132 each coordinate Mn(2+).

The protein belongs to the leguminous lectin family. Tetramer of two alpha and two beta chains. In terms of processing, the N-terminus of alpha chain is blocked. The alpha and beta chains are produced by proteolytic processing, with probably the loss of intervening amino acid(s).

In terms of biological role, D-mannose/D-glucose-binding lectin. Requires Ca(2+) and Mn(2+) ions for full activity. The sequence is that of Lectin from Lablab purpureus (Hyacinth bean).